The sequence spans 39 residues: Photosystem II reaction center protein J (39 aa).

A helical transmembrane segment spans residues 9–29 (LWLVATVGGMAAITVLGIFIY).

The protein belongs to the PsbJ family. In terms of assembly, PSII is composed of 1 copy each of membrane proteins PsbA, PsbB, PsbC, PsbD, PsbE, PsbF, PsbH, PsbI, PsbJ, PsbK, PsbL, PsbM, PsbT, PsbX, PsbY, PsbZ, Psb30/Ycf12, at least 3 peripheral proteins of the oxygen-evolving complex and a large number of cofactors. It forms dimeric complexes.

It is found in the plastid. It localises to the chloroplast thylakoid membrane. One of the components of the core complex of photosystem II (PSII). PSII is a light-driven water:plastoquinone oxidoreductase that uses light energy to abstract electrons from H(2)O, generating O(2) and a proton gradient subsequently used for ATP formation. It consists of a core antenna complex that captures photons, and an electron transfer chain that converts photonic excitation into a charge separation. This is Photosystem II reaction center protein J from Porphyra purpurea (Red seaweed).